Reading from the N-terminus, the 312-residue chain is MFFTVRNLSNRTSQVVNYAYIQYRLLSSTTKTKGLPRLIKAIQGSSKDQLADDHLHMIDDHRYGEDSWFVSSTPKAETMGVADGVGGWRRLGIDSGLFAQELMTNCSEFAEQPQYDGSDPRQLLIDSFDQMKKMSGKVCGSSTACLVTLHRRDCTLHSANLGDSGFMVLRNGKVLHRSDEQLHGFNTPYQLTVAPEPGMDCILCDSPQQAVTSHINVQQGDLVLLATDGLFDNVPESMLVRHLQPLHGETRMEHLQHAVNRLVDMAKTLSLSNTFQSPFALKAKASNMNYGVGGKPDDITVILASVDVPDKD.

A PPM-type phosphatase domain is found at 42 to 306 (IQGSSKDQLA…DDITVILASV (265 aa)). The Mn(2+) site is built by Asp83, Gly84, and Asp228.

This sequence belongs to the PP2C family. Requires Mg(2+) as cofactor. Mn(2+) is required as a cofactor.

The enzyme catalyses O-phospho-L-seryl-[protein] + H2O = L-seryl-[protein] + phosphate. It catalyses the reaction O-phospho-L-threonyl-[protein] + H2O = L-threonyl-[protein] + phosphate. This chain is Protein phosphatase PTC7 homolog fig, found in Drosophila mojavensis (Fruit fly).